Here is a 203-residue protein sequence, read N- to C-terminus: Dual specificity phosphatase 29 (203 aa).

Positions 47 to 193 (HVNQVWPRIY…LRALDIALQE (147 aa)) constitute a Tyrosine-protein phosphatase domain. Position 137–144 (137–144 (HCVMGRSR)) interacts with substrate. C138 (phosphocysteine intermediate) is an active-site residue.

The protein belongs to the protein-tyrosine phosphatase family. Non-receptor class dual specificity subfamily.

It is found in the cytoplasm. It localises to the nucleus. It catalyses the reaction O-phospho-L-tyrosyl-[protein] + H2O = L-tyrosyl-[protein] + phosphate. The enzyme catalyses O-phospho-L-seryl-[protein] + H2O = L-seryl-[protein] + phosphate. It carries out the reaction O-phospho-L-threonyl-[protein] + H2O = L-threonyl-[protein] + phosphate. In terms of biological role, dual specificity phosphatase able to dephosphorylate phosphotyrosine, phosphoserine and phosphothreonine residues within the same substrate, with a preference for phosphotyrosine as a substrate. Involved in the modulation of AMPK and MAPK1/2 signaling pathways. The protein is Dual specificity phosphatase 29 (dusp29) of Oryzias latipes (Japanese rice fish).